An 820-amino-acid polypeptide reads, in one-letter code: Penicillin-binding protein 1A (820 aa).

The segment at 1-120 (MNSDGRHHQS…PAGRLPQPRV (120 aa)) is disordered. The span at 41-53 (TDDRSAPHADSIE) shows a compositional bias: basic and acidic residues. A helical transmembrane segment spans residues 139-159 (LTAAVVILLPMVTFTMAYLIV). Residues 180–360 (GSEIAKIVPP…RWNWVLDGMV (181 aa)) are transglycosylase. E213 (proton donor; for transglycosylase activity) is an active-site residue. Residues 453–743 (AVVSIDPHNG…PSDIWKATMD (291 aa)) form a transpeptidase region. Residue S487 is the Acyl-ester intermediate; for transpeptidase activity of the active site. Residues 792 to 804 (ITIPIGPPTTITL) show a composition bias toward low complexity. A disordered region spans residues 792–820 (ITIPIGPPTTITLAPPPPAPPAATPTPPP). The segment covering 805 to 820 (APPPPAPPAATPTPPP) has biased composition (pro residues).

In the N-terminal section; belongs to the glycosyltransferase 51 family. This sequence in the C-terminal section; belongs to the transpeptidase family. As to quaternary structure, interacts with RipA via its transpeptidase domain (residues 561-820).

The protein localises to the cell membrane. It catalyses the reaction [GlcNAc-(1-&gt;4)-Mur2Ac(oyl-L-Ala-gamma-D-Glu-L-Lys-D-Ala-D-Ala)](n)-di-trans,octa-cis-undecaprenyl diphosphate + beta-D-GlcNAc-(1-&gt;4)-Mur2Ac(oyl-L-Ala-gamma-D-Glu-L-Lys-D-Ala-D-Ala)-di-trans,octa-cis-undecaprenyl diphosphate = [GlcNAc-(1-&gt;4)-Mur2Ac(oyl-L-Ala-gamma-D-Glu-L-Lys-D-Ala-D-Ala)](n+1)-di-trans,octa-cis-undecaprenyl diphosphate + di-trans,octa-cis-undecaprenyl diphosphate + H(+). The catalysed reaction is Preferential cleavage: (Ac)2-L-Lys-D-Ala-|-D-Ala. Also transpeptidation of peptidyl-alanyl moieties that are N-acyl substituents of D-alanine.. It participates in cell wall biogenesis; peptidoglycan biosynthesis. In terms of biological role, cell wall formation. Synthesis of cross-linked peptidoglycan from the lipid intermediates. The enzyme has a penicillin-insensitive transglycosylase N-terminal domain (formation of linear glycan strands) and a penicillin-sensitive transpeptidase C-terminal domain (cross-linking of the peptide subunits). Has little peptidoglycan hydrolytic activity; however it inhibits the synergistic peptidoglycan hydrolysis of RipA plus RpfB. The chain is Penicillin-binding protein 1A (ponA1) from Mycobacterium tuberculosis (strain ATCC 25618 / H37Rv).